The following is a 352-amino-acid chain: Heat-inducible transcription repressor HrcA (352 aa).

It belongs to the HrcA family.

Functionally, negative regulator of class I heat shock genes (grpE-dnaK-dnaJ and groELS operons). Prevents heat-shock induction of these operons. The polypeptide is Heat-inducible transcription repressor HrcA (Latilactobacillus sakei (Lactobacillus sakei)).